Reading from the N-terminus, the 112-residue chain is cAMP-regulated phosphoprotein 19 (112 aa).

Positions 1-11 are enriched in low complexity; it reads MSAESPEPASA. Residues 1 to 49 form a disordered region; that stretch reads MSAESPEPASAEEQKEMEDKVLSPEKAEEAKLKARYPHLGQKPGGSDFL. A compositionally biased stretch (basic and acidic residues) spans 12–32; the sequence is EEQKEMEDKVLSPEKAEEAKL. Phosphoserine; by GWL is present on residues Ser-62 and Ser-104. Residues 72 to 112 form a disordered region; that stretch reads MKNKQLPTAAPDKTEVTGDHIPTPQDLPQRKPSLVASKLAG. Position 104 is a phosphoserine; by PKA (Ser-104).

This sequence belongs to the endosulfine family. As to quaternary structure, interacts (when phosphorylated at Ser-62) with PPP2R2D. Post-translationally, phosphorylation at Ser-62 by MASTL/GWL during mitosis is essential for interaction with PPP2R2D (PR55-delta) and subsequent inactivation of PP2A.

The protein resides in the cytoplasm. Functionally, protein phosphatase inhibitor that specifically inhibits protein phosphatase 2A (PP2A) during mitosis. Inhibition of PP2A is enhanced when ARPP19 is phosphorylated. When phosphorylated at Ser-62 during mitosis, specifically interacts with PPP2R2D (PR55-delta) and inhibits its activity, leading to inactivation of PP2A, an essential condition to keep cyclin-B1-CDK1 activity high during M phase. The chain is cAMP-regulated phosphoprotein 19 (ARPP19) from Taeniopygia guttata (Zebra finch).